Consider the following 429-residue polypeptide: Glucose-1-phosphate adenylyltransferase (429 aa).

Alpha-D-glucose 1-phosphate-binding positions include glycine 162, 177 to 178 (EK), and serine 209.

It belongs to the bacterial/plant glucose-1-phosphate adenylyltransferase family. In terms of assembly, homotetramer.

The enzyme catalyses alpha-D-glucose 1-phosphate + ATP + H(+) = ADP-alpha-D-glucose + diphosphate. The protein operates within glycan biosynthesis; glycogen biosynthesis. Involved in the biosynthesis of ADP-glucose, a building block required for the elongation reactions to produce glycogen. Catalyzes the reaction between ATP and alpha-D-glucose 1-phosphate (G1P) to produce pyrophosphate and ADP-Glc. This is Glucose-1-phosphate adenylyltransferase from Picosynechococcus sp. (strain ATCC 27264 / PCC 7002 / PR-6) (Agmenellum quadruplicatum).